The following is an 894-amino-acid chain: DNA mismatch repair protein MutS (894 aa).

Residue 607–614 (GPNMSGKS) coordinates ATP.

This sequence belongs to the DNA mismatch repair MutS family.

Its function is as follows. This protein is involved in the repair of mismatches in DNA. It is possible that it carries out the mismatch recognition step. This protein has a weak ATPase activity. The polypeptide is DNA mismatch repair protein MutS (Bacillus cereus (strain ZK / E33L)).